Consider the following 548-residue polypeptide: Chaperonin GroEL (548 aa).

ATP-binding positions include 30 to 33 (TLGP), K51, 87 to 91 (DGTTT), G415, and D496.

This sequence belongs to the chaperonin (HSP60) family. Forms a cylinder of 14 subunits composed of two heptameric rings stacked back-to-back. Interacts with the co-chaperonin GroES.

Its subcellular location is the cytoplasm. It catalyses the reaction ATP + H2O + a folded polypeptide = ADP + phosphate + an unfolded polypeptide.. In terms of biological role, together with its co-chaperonin GroES, plays an essential role in assisting protein folding. The GroEL-GroES system forms a nano-cage that allows encapsulation of the non-native substrate proteins and provides a physical environment optimized to promote and accelerate protein folding. The chain is Chaperonin GroEL from Haemophilus influenzae (strain PittGG).